Reading from the N-terminus, the 506-residue chain is Zinc finger and SCAN domain containing protein 4C (506 aa).

The disordered stretch occupies residues 1 to 24 (MASQQAPAKDLQTNNLEFTPTDSS). Positions 37–119 (SAQLNFSPSN…RFMESLTDEC (83 aa)) constitute an SCAN box domain. 4 consecutive C2H2-type zinc fingers follow at residues 395–417 (YKCE…QRTH), 424–446 (LLCV…EIIH), 452–474 (FKCS…EMIH), and 480–503 (YVCS…RNYH).

As to expression, embryonic stem (ES) cell-specific. Expressed in only 5% of ES cells at a given time, but nearly all ES cells express it at least once during 9 passages.

The protein resides in the nucleus. The protein localises to the chromosome. It localises to the telomere. Embryonic stem (ES) cell-specific transcription factor required to regulate ES cell pluripotency. Binds telomeres and plays a key role in genomic stability in ES cells by regulating telomere elongation. Acts as an activator of spontaneous telomere sister chromatid exchange (T-SCE) and telomere elongation in undifferentiated ES cells. This is Zinc finger and SCAN domain containing protein 4C (Zscan4c) from Mus musculus (Mouse).